The following is a 455-amino-acid chain: Argininosuccinate lyase (455 aa).

The protein belongs to the lyase 1 family. Argininosuccinate lyase subfamily.

The protein resides in the cytoplasm. The catalysed reaction is 2-(N(omega)-L-arginino)succinate = fumarate + L-arginine. It participates in amino-acid biosynthesis; L-arginine biosynthesis; L-arginine from L-ornithine and carbamoyl phosphate: step 3/3. The polypeptide is Argininosuccinate lyase (Shewanella denitrificans (strain OS217 / ATCC BAA-1090 / DSM 15013)).